Reading from the N-terminus, the 213-residue chain is Glycerol-3-phosphate acyltransferase (213 aa).

The next 5 helical transmembrane spans lie at 3–23, 68–88, 112–132, 134–154, and 163–183; these read LLLFITIAYLLGSIPTGLWIG, ILLPIIFGMTSISSIAIGFFA, VLLGFAPLYLFFLASIFVLVL, LFSMISLASVVSAIVGVLSVL, and LPNYDYFLTFIVILLAFIIII.

Belongs to the PlsY family. As to quaternary structure, probably interacts with PlsX.

The protein resides in the cell membrane. The catalysed reaction is an acyl phosphate + sn-glycerol 3-phosphate = a 1-acyl-sn-glycero-3-phosphate + phosphate. It participates in lipid metabolism; phospholipid metabolism. Catalyzes the transfer of an acyl group from acyl-phosphate (acyl-PO(4)) to glycerol-3-phosphate (G3P) to form lysophosphatidic acid (LPA). This enzyme utilizes acyl-phosphate as fatty acyl donor, but not acyl-CoA or acyl-ACP. The polypeptide is Glycerol-3-phosphate acyltransferase (Streptococcus pyogenes serotype M28 (strain MGAS6180)).